Here is a 128-residue protein sequence, read N- to C-terminus: Large ribosomal subunit protein eL22 (128 aa).

The residue at position 62 (T62) is a Phosphothreonine. S66 carries the post-translational modification Phosphoserine. K69 bears the N6-succinyllysine mark.

It belongs to the eukaryotic ribosomal protein eL22 family. As to quaternary structure, component of the large ribosomal subunit.

Its subcellular location is the cytoplasm. Its function is as follows. Component of the large ribosomal subunit. The ribosome is a large ribonucleoprotein complex responsible for the synthesis of proteins in the cell. The protein is Large ribosomal subunit protein eL22 (RPL22) of Sus scrofa (Pig).